We begin with the raw amino-acid sequence, 374 residues long: UPF0754 membrane protein SA1664 (374 aa).

The next 2 membrane-spanning stretches (helical) occupy residues 4–24 (LFII…TNVI) and 354–374 (SLGF…AIFV).

It belongs to the UPF0754 family.

It localises to the cell membrane. The protein is UPF0754 membrane protein SA1664 of Staphylococcus aureus (strain N315).